Consider the following 160-residue polypeptide: Nuclear transcription factor Y subunit B-5 (160 aa).

A DNA-binding region spans residues 56–62 (LPIANVG). A subunit association domain (SAD) region spans residues 83-94 (MQECVSEFISFV).

This sequence belongs to the NFYB/HAP3 subunit family. Heterotrimeric transcription factor composed of three components, NF-YA, NF-YB and NF-YC. NF-YB and NF-YC must interact and dimerize for NF-YA association and DNA binding. As to expression, expressed in flowers and siliques.

It localises to the nucleus. In terms of biological role, component of the NF-Y/HAP transcription factor complex. The NF-Y complex stimulates the transcription of various genes by recognizing and binding to a CCAAT motif in promoters. The chain is Nuclear transcription factor Y subunit B-5 (NFYB5) from Arabidopsis thaliana (Mouse-ear cress).